The following is a 114-amino-acid chain: U-myrmeciitoxin(01)-Mg8a (114 aa).

The first 20 residues, 1–20 (MKLSTLLVAFVLLVITVILS), serve as a signal peptide directing secretion. Positions 21–44 (TPSTNAKALAESNALAVAVSEAEP) are excised as a propeptide.

The protein belongs to the formicidae venom precursor-01 superfamily. As to expression, expressed by the venom gland.

Its subcellular location is the secreted. May have antimicrobial properties, like most ant linear peptides. The chain is U-myrmeciitoxin(01)-Mg8a from Myrmecia gulosa (Red bulldog ant).